Consider the following 689-residue polypeptide: Glycine--tRNA ligase beta subunit (689 aa).

It belongs to the class-II aminoacyl-tRNA synthetase family. In terms of assembly, tetramer of two alpha and two beta subunits.

Its subcellular location is the cytoplasm. The catalysed reaction is tRNA(Gly) + glycine + ATP = glycyl-tRNA(Gly) + AMP + diphosphate. The polypeptide is Glycine--tRNA ligase beta subunit (Shewanella baltica (strain OS195)).